The following is a 209-amino-acid chain: Large ribosomal subunit protein uL3 (209 aa).

A disordered region spans residues 124 to 156; sequence KRHNFSGGQRTHGQSDRQRAPGSVGGSSDPSRV.

Belongs to the universal ribosomal protein uL3 family. In terms of assembly, part of the 50S ribosomal subunit. Forms a cluster with proteins L14 and L19.

Its function is as follows. One of the primary rRNA binding proteins, it binds directly near the 3'-end of the 23S rRNA, where it nucleates assembly of the 50S subunit. The protein is Large ribosomal subunit protein uL3 of Pelodictyon phaeoclathratiforme (strain DSM 5477 / BU-1).